The primary structure comprises 64 residues: Large ribosomal subunit protein bL32 (64 aa).

A compositionally biased stretch (basic residues) spans 1 to 16 (MAVQKSRKTRSRRGMR). Residues 1–64 (MAVQKSRKTR…TPKESYEDEE (64 aa)) are disordered.

The protein belongs to the bacterial ribosomal protein bL32 family.

This Coxiella burnetii (strain CbuK_Q154) (Coxiella burnetii (strain Q154)) protein is Large ribosomal subunit protein bL32.